The following is a 268-amino-acid chain: Phosphatidylglycerol--prolipoprotein diacylglyceryl transferase (268 aa).

7 helical membrane-spanning segments follow: residues 23–43 (IGLR…RWLA), 62–82 (LLFN…VFFY), 97–117 (VWEG…AMIW), 132–152 (FVAP…FINL), 179–199 (SQLY…NIFI), 206–226 (ASVA…VEYV), and 241–261 (GQAL…WAYS). Position 145 (arginine 145) interacts with a 1,2-diacyl-sn-glycero-3-phospho-(1'-sn-glycerol).

The protein belongs to the Lgt family.

The protein localises to the cell inner membrane. It carries out the reaction L-cysteinyl-[prolipoprotein] + a 1,2-diacyl-sn-glycero-3-phospho-(1'-sn-glycerol) = an S-1,2-diacyl-sn-glyceryl-L-cysteinyl-[prolipoprotein] + sn-glycerol 1-phosphate + H(+). The protein operates within protein modification; lipoprotein biosynthesis (diacylglyceryl transfer). Functionally, catalyzes the transfer of the diacylglyceryl group from phosphatidylglycerol to the sulfhydryl group of the N-terminal cysteine of a prolipoprotein, the first step in the formation of mature lipoproteins. The sequence is that of Phosphatidylglycerol--prolipoprotein diacylglyceryl transferase from Haemophilus influenzae (strain PittEE).